The following is a 278-amino-acid chain: Acyl-[acyl-carrier-protein]--UDP-N-acetylglucosamine O-acyltransferase (278 aa).

It belongs to the transferase hexapeptide repeat family. LpxA subfamily. Homotrimer.

It localises to the cytoplasm. The enzyme catalyses a (3R)-hydroxyacyl-[ACP] + UDP-N-acetyl-alpha-D-glucosamine = a UDP-3-O-[(3R)-3-hydroxyacyl]-N-acetyl-alpha-D-glucosamine + holo-[ACP]. Its pathway is glycolipid biosynthesis; lipid IV(A) biosynthesis; lipid IV(A) from (3R)-3-hydroxytetradecanoyl-[acyl-carrier-protein] and UDP-N-acetyl-alpha-D-glucosamine: step 1/6. Functionally, involved in the biosynthesis of lipid A, a phosphorylated glycolipid that anchors the lipopolysaccharide to the outer membrane of the cell. This is Acyl-[acyl-carrier-protein]--UDP-N-acetylglucosamine O-acyltransferase from Brucella anthropi (strain ATCC 49188 / DSM 6882 / CCUG 24695 / JCM 21032 / LMG 3331 / NBRC 15819 / NCTC 12168 / Alc 37) (Ochrobactrum anthropi).